The sequence spans 833 residues: Ventricular zone-expressed PH domain-containing protein 1 (833 aa).

2 interaction with TGFBR1 regions span residues 201–319 and 663–833; these read AELL…LANM and ESTF…TTYL. Residues 716-819 form the PH domain; it reads QPLIEGKLKE…WLQCINVALA (104 aa).

Belongs to the MELT/VEPH family. As to quaternary structure, interacts with TGFBR1. In terms of tissue distribution, specifically expressed in kidney and eye. In the eye, expressed in retinal pigmented epithelium but not in the neural retina.

It localises to the cell membrane. In terms of biological role, interacts with TGF-beta receptor type-1 (TGFBR1) and inhibits dissociation of activated SMAD2 from TGFBR1, impeding its nuclear accumulation and resulting in impaired TGF-beta signaling. May also affect FOXO, Hippo and Wnt signaling. The sequence is that of Ventricular zone-expressed PH domain-containing protein 1 (Veph1) from Mus musculus (Mouse).